The sequence spans 77 residues: uncharacterized protein (77 aa).

The interval 53–77 is disordered; that stretch reads KRVSSEANKEKSDITELLRKQVRPD.

This is an uncharacterized protein from Escherichia coli (strain K12).